The sequence spans 247 residues: tRNA (guanine-N(1)-)-methyltransferase (247 aa).

S-adenosyl-L-methionine contacts are provided by residues glycine 112 and 131 to 136; that span reads LGDFVL.

This sequence belongs to the RNA methyltransferase TrmD family. In terms of assembly, homodimer.

Its subcellular location is the cytoplasm. The enzyme catalyses guanosine(37) in tRNA + S-adenosyl-L-methionine = N(1)-methylguanosine(37) in tRNA + S-adenosyl-L-homocysteine + H(+). In terms of biological role, specifically methylates guanosine-37 in various tRNAs. This is tRNA (guanine-N(1)-)-methyltransferase from Syntrophotalea carbinolica (strain DSM 2380 / NBRC 103641 / GraBd1) (Pelobacter carbinolicus).